The primary structure comprises 87 residues: Putative regulatory protein GWCH70_1057 (87 aa).

The protein belongs to the RemA family.

The chain is Putative regulatory protein GWCH70_1057 from Geobacillus sp. (strain WCH70).